Consider the following 438-residue polypeptide: GTPase Der (438 aa).

2 consecutive EngA-type G domains span residues 4 to 168 and 177 to 352; these read PIVA…KNEG and IKIA…DNYC. GTP contacts are provided by residues 10 to 17, 57 to 61, 120 to 123, 183 to 190, 230 to 234, and 295 to 298; these read GRPNVGKS, DTGGI, NKID, GKPNVGKS, DTAGV, and NKWD. A KH-like domain is found at 353 to 437; that stretch reads KQIKTGILND…GIKLEFRERK (85 aa).

It belongs to the TRAFAC class TrmE-Era-EngA-EngB-Septin-like GTPase superfamily. EngA (Der) GTPase family. As to quaternary structure, associates with the 50S ribosomal subunit.

In terms of biological role, GTPase that plays an essential role in the late steps of ribosome biogenesis. This is GTPase Der from Clostridium kluyveri (strain NBRC 12016).